A 387-amino-acid polypeptide reads, in one-letter code: Flap endonuclease 1 (387 aa).

The N-domain stretch occupies residues 1–104 (MGIKGLSQLI…GELEKRKERQ (104 aa)). Mg(2+) is bound at residue aspartate 34. A DNA-binding site is contributed by arginine 70. Aspartate 86, glutamate 158, glutamate 160, aspartate 179, and aspartate 181 together coordinate Mg(2+). The segment at 122–253 (KMVMWNKRTT…KKALAMIKKY (132 aa)) is I-domain. Glutamate 158 is a binding site for DNA. Positions 231 and 233 each coordinate DNA. Aspartate 233 serves as a coordination point for Mg(2+). The segment at 332 to 387 (SSRGKPTQTRLDGFFTPVASSSTTKKKAPAKKDDKKSATDKKRKAADASTSSKKKK) is disordered. The interaction with PCNA stretch occupies residues 338 to 346 (TQTRLDGFF). The span at 361–371 (AKKDDKKSATD) shows a compositional bias: basic and acidic residues. A compositionally biased stretch (low complexity) spans 378-387 (DASTSSKKKK).

The protein belongs to the XPG/RAD2 endonuclease family. FEN1 subfamily. In terms of assembly, interacts with PCNA. Three molecules of FEN1 bind to one PCNA trimer with each molecule binding to one PCNA monomer. PCNA stimulates the nuclease activity without altering cleavage specificity. It depends on Mg(2+) as a cofactor. Post-translationally, phosphorylated. Phosphorylation upon DNA damage induces relocalization to the nuclear plasma.

The protein localises to the nucleus. Its subcellular location is the nucleolus. It localises to the nucleoplasm. The protein resides in the mitochondrion. In terms of biological role, structure-specific nuclease with 5'-flap endonuclease and 5'-3' exonuclease activities involved in DNA replication and repair. During DNA replication, cleaves the 5'-overhanging flap structure that is generated by displacement synthesis when DNA polymerase encounters the 5'-end of a downstream Okazaki fragment. It enters the flap from the 5'-end and then tracks to cleave the flap base, leaving a nick for ligation. Also involved in the long patch base excision repair (LP-BER) pathway, by cleaving within the apurinic/apyrimidinic (AP) site-terminated flap. Acts as a genome stabilization factor that prevents flaps from equilibrating into structures that lead to duplications and deletions. Also possesses 5'-3' exonuclease activity on nicked or gapped double-stranded DNA, and exhibits RNase H activity. Also involved in replication and repair of rDNA and in repairing mitochondrial DNA. The polypeptide is Flap endonuclease 1 (Naegleria gruberi (Amoeba)).